An 860-amino-acid polypeptide reads, in one-letter code: DNA mismatch repair protein MutS (860 aa).

Residue 618 to 625 participates in ATP binding; sequence GPNMGGKS.

It belongs to the DNA mismatch repair MutS family.

Its function is as follows. This protein is involved in the repair of mismatches in DNA. It is possible that it carries out the mismatch recognition step. This protein has a weak ATPase activity. The sequence is that of DNA mismatch repair protein MutS from Hahella chejuensis (strain KCTC 2396).